We begin with the raw amino-acid sequence, 814 residues long: G-type lectin S-receptor-like serine/threonine-protein kinase At1g61400 (814 aa).

The first 34 residues, 1–34 (MDFLFLLLERKNKHMGKKRVVLLWLSIFISFSSA), serve as a signal peptide directing secretion. The 120-residue stretch at 35-154 (EITEESPLSI…VSGRTLWESF (120 aa)) folds into the Bulb-type lectin domain. Over 35-436 (EITEESPLSI…ELDVNKRKKT (402 aa)) the chain is Extracellular. N-linked (GlcNAc...) asparagine glycosylation is found at Asn63, Asn104, Asn127, and Asn246. An EGF-like; atypical domain is found at 288-324 (PANSCDIYGVCGPFGFCVISVPPKCKCFKGFIPKSIE). 2 disulfides stabilise this stretch: Cys292–Cys304 and Cys298–Cys312. N-linked (GlcNAc...) asparagine glycosylation is found at Asn330, Asn346, and Asn385. The region spanning 343–425 (CQGNSTGKDA…GELLSIRLAR (83 aa)) is the PAN domain. Cystine bridges form between Cys378/Cys399 and Cys382/Cys388. Residues 437–457 (IIAITVSLTLFVILGFTAFGF) form a helical membrane-spanning segment. The Cytoplasmic segment spans residues 458–814 (WRRRVEQNAL…EMTESVIHGR (357 aa)). Residues 500–785 (FSLSNKLGHG…DLPLPKQPTF (286 aa)) enclose the Protein kinase domain. Residues 506 to 514 (LGHGGFGSV) and Lys528 each bind ATP. A phosphoserine mark is found at Ser534 and Ser549. The caM-binding stretch occupies residues 589–606 (KKRLEIDWPKRFDIIQGI). The active-site Proton acceptor is Asp625. Phosphoserine occurs at positions 629 and 642. At Thr659 the chain carries Phosphothreonine. 2 positions are modified to phosphoserine: Ser702 and Ser796.

Belongs to the protein kinase superfamily. Ser/Thr protein kinase family.

The protein localises to the cell membrane. The catalysed reaction is L-seryl-[protein] + ATP = O-phospho-L-seryl-[protein] + ADP + H(+). The enzyme catalyses L-threonyl-[protein] + ATP = O-phospho-L-threonyl-[protein] + ADP + H(+). The chain is G-type lectin S-receptor-like serine/threonine-protein kinase At1g61400 from Arabidopsis thaliana (Mouse-ear cress).